We begin with the raw amino-acid sequence, 180 residues long: Translation initiation factor IF-3 (180 aa).

It belongs to the IF-3 family. Monomer.

The protein resides in the cytoplasm. IF-3 binds to the 30S ribosomal subunit and shifts the equilibrium between 70S ribosomes and their 50S and 30S subunits in favor of the free subunits, thus enhancing the availability of 30S subunits on which protein synthesis initiation begins. This is Translation initiation factor IF-3 from Pectobacterium atrosepticum (strain SCRI 1043 / ATCC BAA-672) (Erwinia carotovora subsp. atroseptica).